A 198-amino-acid polypeptide reads, in one-letter code: Na(+)-translocating NADH-quinone reductase subunit E (198 aa).

A run of 6 helical transmembrane segments spans residues 11–31 (SIFI…FLAV), 39–59 (FGLG…NNLV), 77–97 (FLNF…LEMI), 110–130 (GIFL…SFMV), 140–160 (VVYG…LAGI), and 176–196 (LGIT…FSGV).

Belongs to the NqrDE/RnfAE family. Composed of six subunits; NqrA, NqrB, NqrC, NqrD, NqrE and NqrF.

The protein localises to the cell inner membrane. The catalysed reaction is a ubiquinone + n Na(+)(in) + NADH + H(+) = a ubiquinol + n Na(+)(out) + NAD(+). Functionally, NQR complex catalyzes the reduction of ubiquinone-1 to ubiquinol by two successive reactions, coupled with the transport of Na(+) ions from the cytoplasm to the periplasm. NqrA to NqrE are probably involved in the second step, the conversion of ubisemiquinone to ubiquinol. The chain is Na(+)-translocating NADH-quinone reductase subunit E from Vibrio vulnificus (strain CMCP6).